Reading from the N-terminus, the 223-residue chain is Ribonuclease T (223 aa).

Residues 1–11 (MSDDHFDDEQE) are compositionally biased toward acidic residues. The disordered stretch occupies residues 1–21 (MSDDHFDDEQEGSSGGPRHPM). Residues 31 to 205 (VVVDVETGGF…YDTEKTAELF (175 aa)) form the Exonuclease domain. Mg(2+) contacts are provided by D34, E36, H192, and D197. H192 serves as the catalytic Proton donor/acceptor.

The protein belongs to the RNase T family. As to quaternary structure, homodimer. It depends on Mg(2+) as a cofactor.

Trims short 3' overhangs of a variety of RNA species, leaving a one or two nucleotide 3' overhang. Responsible for the end-turnover of tRNA: specifically removes the terminal AMP residue from uncharged tRNA (tRNA-C-C-A). Also appears to be involved in tRNA biosynthesis. In Pseudomonas fluorescens (strain ATCC BAA-477 / NRRL B-23932 / Pf-5), this protein is Ribonuclease T.